The sequence spans 73 residues: Crustacean hyperglycemic hormone (73 aa).

3 disulfides stabilise this stretch: C7/C43, C23/C39, and C26/C52. A Serine amide modification is found at S73.

In terms of tissue distribution, produced by the medulla terminalis X-organ in the eyestalks and transported to the sinus gland where they are stored and released. Found also in the brain; in the neuroendocrine structures of the protocerebrum.

The protein resides in the secreted. Hormone found in the sinus gland of isopods and decapods which controls the blood sugar level. Has a secretagogue action over the amylase released from the midgut gland. May act as a stress hormone and may be involved in the control of molting and reproduction. The polypeptide is Crustacean hyperglycemic hormone (Armadillidium vulgare (Pillbug)).